The sequence spans 254 residues: Hydroxypyruvate/pyruvate aldolase (254 aa).

The active-site Proton acceptor is His47. A divalent metal cation-binding residues include Glu151 and Asp177.

It belongs to the HpcH/HpaI aldolase family. A divalent metal cation serves as cofactor.

The enzyme catalyses D-glyceraldehyde + pyruvate = 2-dehydro-3-deoxy-L-galactonate. In terms of biological role, aldolase which can catalyze in vitro the aldolisation reaction between hydroxypyruvate (HPA) or pyruvate (PA) and D-glyceraldehyde (D-GA). The condensation of pyruvate and D-glyceraldehyde produces 2-dehydro-3-deoxy-L-galactonate as the major product. Has weak activity with hydroxypyruvate and D-glyceraldehyde. This chain is Hydroxypyruvate/pyruvate aldolase, found in Chromohalobacter salexigens (strain ATCC BAA-138 / DSM 3043 / CIP 106854 / NCIMB 13768 / 1H11).